The following is a 461-amino-acid chain: Protein FAM124B (461 aa).

Ser49 is subject to Phosphoserine. The segment at 302–346 (VELPEPGGRPVSDGSSNTWWKSAGGSAQPSSPATESQPQLSSLHL) is disordered. The span at 323-334 (SAGGSAQPSSPA) shows a compositional bias: low complexity.

The protein belongs to the FAM124 family. As to quaternary structure, interacts with CHD7 and CHD8.

The protein resides in the nucleus. The protein is Protein FAM124B (FAM124B) of Bos taurus (Bovine).